The primary structure comprises 77 residues: Serine protease inhibitor 3 (77 aa).

Residues 1–17 (MMFTPLIVLTLLVLATA) form the signal peptide. 4 disulfides stabilise this stretch: C21/C53, C30/C48, C33/C44, and C55/C68. Residues 21–74 (CGPNEQWSGCPKCELQSGESDKPCATICGEPKCYCSPDKYRRIPDGRCIRKIQC) enclose the TIL domain.

Its subcellular location is the secreted. In terms of biological role, defends the organism against the host's proteinases. The sequence is that of Serine protease inhibitor 3 from Anisakis simplex (Herring worm).